Here is an 89-residue protein sequence, read N- to C-terminus: Small ribosomal subunit protein uS15 (89 aa).

The protein belongs to the universal ribosomal protein uS15 family. As to quaternary structure, part of the 30S ribosomal subunit. Forms a bridge to the 50S subunit in the 70S ribosome, contacting the 23S rRNA.

Its function is as follows. One of the primary rRNA binding proteins, it binds directly to 16S rRNA where it helps nucleate assembly of the platform of the 30S subunit by binding and bridging several RNA helices of the 16S rRNA. In terms of biological role, forms an intersubunit bridge (bridge B4) with the 23S rRNA of the 50S subunit in the ribosome. In Streptococcus uberis (strain ATCC BAA-854 / 0140J), this protein is Small ribosomal subunit protein uS15.